Consider the following 239-residue polypeptide: Ribosomal RNA small subunit methyltransferase G (239 aa).

S-adenosyl-L-methionine-binding positions include Gly75, Leu80, 126–127 (AE), and Arg142.

This sequence belongs to the methyltransferase superfamily. RNA methyltransferase RsmG family.

It is found in the cytoplasm. Specifically methylates the N7 position of guanine in position 518 of 16S rRNA. This Streptomyces coelicolor (strain ATCC BAA-471 / A3(2) / M145) protein is Ribosomal RNA small subunit methyltransferase G.